The chain runs to 414 residues: Histidine--tRNA ligase (414 aa).

The protein belongs to the class-II aminoacyl-tRNA synthetase family. As to quaternary structure, homodimer.

It is found in the cytoplasm. The catalysed reaction is tRNA(His) + L-histidine + ATP = L-histidyl-tRNA(His) + AMP + diphosphate + H(+). This chain is Histidine--tRNA ligase (hisS), found in Mycoplasma genitalium (strain ATCC 33530 / DSM 19775 / NCTC 10195 / G37) (Mycoplasmoides genitalium).